Reading from the N-terminus, the 456-residue chain is Perilipin-5 (456 aa).

The tract at residues 1–20 (MSEDEAAQAPGPSLSEQDQQ) is disordered. An interaction with LIPE region spans residues 1–108 (MSEDEAAQAP…KLEEKLPFLQ (108 aa)). An essential for lipid droplet targeting region spans residues 1–173 (MSEDEAAQAP…HFLPMTEEEL (173 aa)). A phosphoserine mark is found at Ser2, Ser148, and Ser324. The interaction with PNPLA2 and ABHD5 stretch occupies residues 185–456 (VGSVEEQRKH…KHTLMPELDF (272 aa)). Residues 420–456 (AWQAQHGEGTVLSGNIPEEEPEPPSRPKHTLMPELDF) are disordered. A recruits mitochondria at the lipid droplet surface region spans residues 438 to 456 (EEPEPPSRPKHTLMPELDF).

Belongs to the perilipin family. In terms of assembly, homooligomer. Interacts with PNPLA2; prevents interaction of PNPLA2 with ABHD5. Interacts with ABHD5; targets ABHD5 to lipid droplets and promotes interaction of ABHD5 with PNPLA2. Interacts with LIPE. Phosphorylated by PKA. Phosphorylated on serine in skeletal muscle at rest or upon lipolytic stimulation.

It is found in the lipid droplet. The protein resides in the cytoplasm. The protein localises to the mitochondrion. Its function is as follows. Lipid droplet-associated protein that maintains the balance between lipogenesis and lipolysis and also regulates fatty acid oxidation in oxidative tissues. Recruits mitochondria to the surface of lipid droplets and is involved in lipid droplet homeostasis by regulating both the storage of fatty acids in the form of triglycerides and the release of fatty acids for mitochondrial fatty acid oxidation. In lipid droplet triacylglycerol hydrolysis, plays a role as a scaffolding protein for three major key lipolytic players: ABHD5, PNPLA2 and LIPE. Reduces the triacylglycerol hydrolase activity of PNPLA2 by recruiting and sequestering PNPLA2 to lipid droplets. Phosphorylation by PKA enables lipolysis probably by promoting release of ABHD5 from the perilipin scaffold and by facilitating interaction of ABHD5 with PNPLA2. Also increases lipolysis through interaction with LIPE and upon PKA-mediated phosphorylation of LIPE. The chain is Perilipin-5 (Plin5) from Ovis aries (Sheep).